A 376-amino-acid chain; its full sequence is Succinate--CoA ligase [ADP-forming] subunit beta (376 aa).

The ATP-grasp domain maps to 9–237 (KEIFSKYGIP…PTEEEKVEAD (229 aa)). Residues Lys-46, 53-55 (GRG), Val-95, and Glu-100 contribute to the ATP site. Mg(2+) contacts are provided by Asn-192 and Asp-206. Residues Asn-257 and 314–316 (GIT) contribute to the substrate site.

The protein belongs to the succinate/malate CoA ligase beta subunit family. Heterotetramer of two alpha and two beta subunits. The cofactor is Mg(2+).

The enzyme catalyses succinate + ATP + CoA = succinyl-CoA + ADP + phosphate. The catalysed reaction is GTP + succinate + CoA = succinyl-CoA + GDP + phosphate. The protein operates within carbohydrate metabolism; tricarboxylic acid cycle; succinate from succinyl-CoA (ligase route): step 1/1. Succinyl-CoA synthetase functions in the citric acid cycle (TCA), coupling the hydrolysis of succinyl-CoA to the synthesis of either ATP or GTP and thus represents the only step of substrate-level phosphorylation in the TCA. The beta subunit provides nucleotide specificity of the enzyme and binds the substrate succinate, while the binding sites for coenzyme A and phosphate are found in the alpha subunit. In Bacteroides thetaiotaomicron (strain ATCC 29148 / DSM 2079 / JCM 5827 / CCUG 10774 / NCTC 10582 / VPI-5482 / E50), this protein is Succinate--CoA ligase [ADP-forming] subunit beta.